The sequence spans 341 residues: Phenylalanine--tRNA ligase alpha subunit (341 aa).

Glutamate 254 contributes to the Mg(2+) binding site.

This sequence belongs to the class-II aminoacyl-tRNA synthetase family. Phe-tRNA synthetase alpha subunit type 1 subfamily. Tetramer of two alpha and two beta subunits. It depends on Mg(2+) as a cofactor.

The protein localises to the cytoplasm. It catalyses the reaction tRNA(Phe) + L-phenylalanine + ATP = L-phenylalanyl-tRNA(Phe) + AMP + diphosphate + H(+). The sequence is that of Phenylalanine--tRNA ligase alpha subunit (pheS) from Mycoplasma genitalium (strain ATCC 33530 / DSM 19775 / NCTC 10195 / G37) (Mycoplasmoides genitalium).